The primary structure comprises 134 residues: Small ribosomal subunit protein uS8c (134 aa).

This sequence belongs to the universal ribosomal protein uS8 family. As to quaternary structure, part of the 30S ribosomal subunit.

It localises to the plastid. It is found in the chloroplast. Its function is as follows. One of the primary rRNA binding proteins, it binds directly to 16S rRNA central domain where it helps coordinate assembly of the platform of the 30S subunit. The protein is Small ribosomal subunit protein uS8c (rps8) of Panax ginseng (Korean ginseng).